A 188-amino-acid chain; its full sequence is Photosystem I assembly protein Ycf4 (188 aa).

A run of 2 helical transmembrane segments spans residues 26–46 and 70–90; these read YFWA…GLSS and LLFY…SLLW.

The protein belongs to the Ycf4 family.

Its subcellular location is the cellular thylakoid membrane. Seems to be required for the assembly of the photosystem I complex. This Microcystis aeruginosa (strain NIES-843 / IAM M-2473) protein is Photosystem I assembly protein Ycf4.